The primary structure comprises 130 residues: Small ribosomal subunit protein uS9 (130 aa).

The interval 111–130 (VERKKVGLHKARRATQFSKR) is disordered. A compositionally biased stretch (basic residues) spans 116-130 (VGLHKARRATQFSKR).

This sequence belongs to the universal ribosomal protein uS9 family.

This chain is Small ribosomal subunit protein uS9, found in Xylella fastidiosa (strain M23).